The primary structure comprises 344 residues: N-acetyl-gamma-glutamyl-phosphate reductase (344 aa).

Residue Cys-149 is part of the active site.

Belongs to the NAGSA dehydrogenase family. Type 1 subfamily.

It is found in the cytoplasm. It catalyses the reaction N-acetyl-L-glutamate 5-semialdehyde + phosphate + NADP(+) = N-acetyl-L-glutamyl 5-phosphate + NADPH + H(+). The protein operates within amino-acid biosynthesis; L-arginine biosynthesis; N(2)-acetyl-L-ornithine from L-glutamate: step 3/4. In terms of biological role, catalyzes the NADPH-dependent reduction of N-acetyl-5-glutamyl phosphate to yield N-acetyl-L-glutamate 5-semialdehyde. The protein is N-acetyl-gamma-glutamyl-phosphate reductase of Acidithiobacillus ferrooxidans (strain ATCC 23270 / DSM 14882 / CIP 104768 / NCIMB 8455) (Ferrobacillus ferrooxidans (strain ATCC 23270)).